The following is a 721-amino-acid chain: Glycine--tRNA ligase beta subunit (721 aa).

Belongs to the class-II aminoacyl-tRNA synthetase family. As to quaternary structure, tetramer of two alpha and two beta subunits.

It is found in the cytoplasm. It catalyses the reaction tRNA(Gly) + glycine + ATP = glycyl-tRNA(Gly) + AMP + diphosphate. The sequence is that of Glycine--tRNA ligase beta subunit from Sinorhizobium fredii (strain NBRC 101917 / NGR234).